The sequence spans 535 residues: D-2-hydroxyglutarate dehydrogenase, mitochondrial (535 aa).

A mitochondrion-targeting transit peptide spans 1–50 (MVLHLVPRWSASLFRASPRWKKTYSQRASAQLKWLGCPRSVYSPLACRAY). One can recognise an FAD-binding PCMH-type domain in the interval 110-289 (VRGCSKVLLR…TAVSIVCPPR (180 aa)). Residue Lys-115 is modified to N6-succinyllysine. (R)-2-hydroxyglutarate-binding residues include Arg-400, Thr-404, and Lys-415. Residue Arg-400 participates in (R)-lactate binding. Arg-400, Thr-404, and Lys-415 together coordinate (R)-malate. The Zn(2+) site is built by His-448 and His-455. Asn-457 contacts (R)-2-hydroxyglutarate. Glu-489 provides a ligand contact to Zn(2+). Residue His-490 participates in (R)-2-hydroxyglutarate binding. His-490 contacts (R)-lactate. His-490 contributes to the (R)-malate binding site.

This sequence belongs to the FAD-binding oxidoreductase/transferase type 4 family. The cofactor is FAD.

It is found in the mitochondrion. It carries out the reaction (R)-2-hydroxyglutarate + A = 2-oxoglutarate + AH2. The enzyme catalyses (R)-malate + A = oxaloacetate + AH2. With respect to regulation, activated by zinc, cobalt and manganese ions. Inhibited by EDTA. Functionally, catalyzes the oxidation of D-2-hydroxyglutarate (D-2-HG) to alpha-ketoglutarate. Also catalyzes the oxidation of other D-2-hydroxyacids, such as D-malate (D-MAL) and D-lactate (D-LAC). Exhibits high activities towards D-2-HG and D-MAL but a very weak activity towards D-LAC. The chain is D-2-hydroxyglutarate dehydrogenase, mitochondrial from Rattus norvegicus (Rat).